The chain runs to 367 residues: tRNA/tmRNA (uracil-C(5))-methyltransferase (367 aa).

The S-adenosyl-L-methionine site is built by Gln-190, Tyr-218, Asn-223, Glu-239, and Asp-299. Cys-324 functions as the Nucleophile in the catalytic mechanism. The active-site Proton acceptor is Glu-358.

This sequence belongs to the class I-like SAM-binding methyltransferase superfamily. RNA M5U methyltransferase family. TrmA subfamily.

The catalysed reaction is uridine(54) in tRNA + S-adenosyl-L-methionine = 5-methyluridine(54) in tRNA + S-adenosyl-L-homocysteine + H(+). It catalyses the reaction uridine(341) in tmRNA + S-adenosyl-L-methionine = 5-methyluridine(341) in tmRNA + S-adenosyl-L-homocysteine + H(+). Functionally, dual-specificity methyltransferase that catalyzes the formation of 5-methyluridine at position 54 (m5U54) in all tRNAs, and that of position 341 (m5U341) in tmRNA (transfer-mRNA). This Dickeya chrysanthemi (strain Ech1591) (Dickeya zeae (strain Ech1591)) protein is tRNA/tmRNA (uracil-C(5))-methyltransferase.